The following is a 207-amino-acid chain: Guanylate kinase (207 aa).

A Guanylate kinase-like domain is found at 5–184 (GNLFIVSAPS…ALADLVAIIR (180 aa)). 12 to 19 (APSGAGKS) provides a ligand contact to ATP.

The protein belongs to the guanylate kinase family.

It is found in the cytoplasm. The catalysed reaction is GMP + ATP = GDP + ADP. Essential for recycling GMP and indirectly, cGMP. This Shewanella violacea (strain JCM 10179 / CIP 106290 / LMG 19151 / DSS12) protein is Guanylate kinase.